The following is a 504-amino-acid chain: Acetylcholine receptor subunit epsilon (504 aa).

Residues 1–19 (MESGVRILSLLILLHNSLA) form the signal peptide. The Extracellular portion of the chain corresponds to 20–240 (SESEESRLIK…IVFNLIIQRK (221 aa)). N-linked (GlcNAc...) asparagine glycosylation is found at Asn88 and Asn161. A disulfide bond links Cys148 and Cys162. The chain crosses the membrane as a helical span at residues 241–265 (PLFYIINIIVPCVLISFLVVLVYFL). Residues 266 to 273 (PAKAGGQK) lie on the Cytoplasmic side of the membrane. A helical transmembrane segment spans residues 274–292 (CTVSISVLLAQTVFLFLIA). The Extracellular portion of the chain corresponds to 293–307 (QMVPETSLSVPLIGK). The helical transmembrane segment at 308 to 329 (YLMFVMFVSTLIVLSCVIVLNV) threads the bilayer. Over 330-473 (SLRSPSTHNL…WILIGKVLDV (144 aa)) the chain is Cytoplasmic. Residues 474 to 497 (LCFWVALPLFVLGTLAIFLMGHFN) traverse the membrane as a helical segment. Topologically, residues 498 to 504 (TAPEHPF) are extracellular.

This sequence belongs to the ligand-gated ion channel (TC 1.A.9) family. Acetylcholine receptor (TC 1.A.9.1) subfamily. Epsilon/CHRNE sub-subfamily. In terms of assembly, pentamer of two alpha chains, and one each of the beta, delta, and gamma (in immature muscle) or epsilon (in mature muscle) chains.

It is found in the postsynaptic cell membrane. Its subcellular location is the cell membrane. It catalyses the reaction K(+)(in) = K(+)(out). The enzyme catalyses Na(+)(in) = Na(+)(out). Functionally, after binding acetylcholine, the AChR responds by an extensive change in conformation that affects all subunits and leads to opening of an ion-conducting channel across the plasma membrane. The polypeptide is Acetylcholine receptor subunit epsilon (chrne) (Xenopus laevis (African clawed frog)).